A 343-amino-acid polypeptide reads, in one-letter code: 3-hydroxy-3-methylglutaryl-CoA lyase, cytoplasmic (343 aa).

Residue Gly-2 is the site of N-myristoyl glycine attachment. The 268-residue stretch at 48–315 (VKIVEVGPRD…NTGVDLYKVM (268 aa)) folds into the Pyruvate carboxyltransferase domain. Arg-56 contributes to the substrate binding site. A divalent metal cation-binding residues include Asp-57, His-248, and His-250. Residue Cys-281 is part of the active site. A divalent metal cation is bound at residue Asn-290.

This sequence belongs to the HMG-CoA lyase family. It depends on a divalent metal cation as a cofactor.

Its subcellular location is the cytoplasm. The protein localises to the cytosol. The protein resides in the endoplasmic reticulum membrane. The enzyme catalyses (3S)-3-hydroxy-3-methylglutaryl-CoA = acetoacetate + acetyl-CoA. It participates in metabolic intermediate metabolism; (S)-3-hydroxy-3-methylglutaryl-CoA degradation; acetoacetate from (S)-3-hydroxy-3-methylglutaryl-CoA: step 1/1. In terms of biological role, non-mitochondrial 3-hydroxy-3-methylglutaryl-CoA lyase that catalyzes a cation-dependent cleavage of (S)-3-hydroxy-3-methylglutaryl-CoA into acetyl-CoA and acetoacetate, a key step in ketogenesis, the products of which support energy production in nonhepatic animal tissues. This Mus musculus (Mouse) protein is 3-hydroxy-3-methylglutaryl-CoA lyase, cytoplasmic (Hmgcll1).